The sequence spans 84 residues: Putative defensin-like protein 101 (84 aa).

The N-terminal stretch at Met1–Ala27 is a signal peptide. Disulfide bonds link Cys39–Cys81, Cys43–Cys67, Cys52–Cys79, and Cys56–Cys80.

It belongs to the DEFL family.

The protein localises to the secreted. The chain is Putative defensin-like protein 101 from Arabidopsis thaliana (Mouse-ear cress).